The primary structure comprises 494 residues: Catalase A (494 aa).

The span at 1–23 (MTDRPTITTTAGAPVPDNQNSLT) shows a compositional bias: polar residues. A disordered region spans residues 1–25 (MTDRPTITTTAGAPVPDNQNSLTAG). Catalysis depends on residues His55 and Asn127. Heme is bound at residue Tyr337.

This sequence belongs to the catalase family. Requires heme as cofactor.

It localises to the periplasm. It catalyses the reaction 2 H2O2 = O2 + 2 H2O. Its function is as follows. Decomposes hydrogen peroxide into water and oxygen; serves to protect cells from the toxic effects of hydrogen peroxide. This is Catalase A (katA) from Rhizobium meliloti (strain 1021) (Ensifer meliloti).